We begin with the raw amino-acid sequence, 40 residues long: MKVRKSLRSLKNKPGAQVVRRRGKVYVINKKEPRFKARQG.

This sequence belongs to the bacterial ribosomal protein bL36 family.

The sequence is that of Large ribosomal subunit protein bL36 from Corynebacterium jeikeium (strain K411).